A 113-amino-acid chain; its full sequence is Putative pterin-4-alpha-carbinolamine dehydratase (113 aa).

This sequence belongs to the pterin-4-alpha-carbinolamine dehydratase family.

The enzyme catalyses (4aS,6R)-4a-hydroxy-L-erythro-5,6,7,8-tetrahydrobiopterin = (6R)-L-erythro-6,7-dihydrobiopterin + H2O. This chain is Putative pterin-4-alpha-carbinolamine dehydratase, found in Legionella pneumophila (strain Paris).